A 492-amino-acid polypeptide reads, in one-letter code: Ketol-acid reductoisomerase (NADP(+)) (492 aa).

In terms of domain architecture, KARI N-terminal Rossmann spans Leu-14–Ser-208. NADP(+) contacts are provided by residues Cys-45 to Gln-48, Arg-68, Arg-76, Ser-78, and Asp-108 to Gln-110. His-132 is a catalytic residue. Gly-158 serves as a coordination point for NADP(+). 2 KARI C-terminal knotted domains span residues Ser-209 to Lys-344 and Tyr-345 to Met-485. Asp-217, Glu-221, Glu-389, and Glu-393 together coordinate Mg(2+). Substrate is bound at residue Ser-414.

The protein belongs to the ketol-acid reductoisomerase family. Requires Mg(2+) as cofactor.

The enzyme catalyses (2R)-2,3-dihydroxy-3-methylbutanoate + NADP(+) = (2S)-2-acetolactate + NADPH + H(+). It carries out the reaction (2R,3R)-2,3-dihydroxy-3-methylpentanoate + NADP(+) = (S)-2-ethyl-2-hydroxy-3-oxobutanoate + NADPH + H(+). Its pathway is amino-acid biosynthesis; L-isoleucine biosynthesis; L-isoleucine from 2-oxobutanoate: step 2/4. It functions in the pathway amino-acid biosynthesis; L-valine biosynthesis; L-valine from pyruvate: step 2/4. Its function is as follows. Involved in the biosynthesis of branched-chain amino acids (BCAA). Catalyzes an alkyl-migration followed by a ketol-acid reduction of (S)-2-acetolactate (S2AL) to yield (R)-2,3-dihydroxy-isovalerate. In the isomerase reaction, S2AL is rearranged via a Mg-dependent methyl migration to produce 3-hydroxy-3-methyl-2-ketobutyrate (HMKB). In the reductase reaction, this 2-ketoacid undergoes a metal-dependent reduction by NADPH to yield (R)-2,3-dihydroxy-isovalerate. This Haemophilus influenzae (strain PittEE) protein is Ketol-acid reductoisomerase (NADP(+)).